A 266-amino-acid polypeptide reads, in one-letter code: PTS system sorbose-specific EIIC component (266 aa).

Residues 1–237 (MEISTLQIIA…GGVGVIIALI (237 aa)) enclose the PTS EIIC type-4 domain. 7 helical membrane passes run 3–23 (ISTL…MGSV), 33–53 (LIAC…VMLG), 79–99 (IISA…IAIA), 100–120 (LPVA…TVVF), 151–171 (VAIP…SSML), 183–203 (QIAG…MMGV), and 219–239 (YLDF…LIYI).

Its subcellular location is the cell inner membrane. The phosphoenolpyruvate-dependent sugar phosphotransferase system (PTS), a major carbohydrate active transport system, catalyzes the phosphorylation of incoming sugar substrates concomitant with their translocation across the cell membrane. The enzyme II SorABFM PTS system is involved in L-sorbose transport. In Klebsiella pneumoniae, this protein is PTS system sorbose-specific EIIC component.